The chain runs to 100 residues: Large ribosomal subunit protein uL23 (100 aa).

It belongs to the universal ribosomal protein uL23 family. Part of the 50S ribosomal subunit. Contacts protein L29, and trigger factor when it is bound to the ribosome.

One of the early assembly proteins it binds 23S rRNA. One of the proteins that surrounds the polypeptide exit tunnel on the outside of the ribosome. Forms the main docking site for trigger factor binding to the ribosome. The sequence is that of Large ribosomal subunit protein uL23 from Shewanella oneidensis (strain ATCC 700550 / JCM 31522 / CIP 106686 / LMG 19005 / NCIMB 14063 / MR-1).